Reading from the N-terminus, the 93-residue chain is UPF0358 protein RBAM_014700 (93 aa).

Belongs to the UPF0358 family.

The chain is UPF0358 protein RBAM_014700 from Bacillus velezensis (strain DSM 23117 / BGSC 10A6 / LMG 26770 / FZB42) (Bacillus amyloliquefaciens subsp. plantarum).